Reading from the N-terminus, the 33-residue chain is Glutaminase-asparaginase (33 aa).

The Asparaginase/glutaminase domain maps to 1–33 (NVVVLATGGTIAGAGTNAFASQXGPLGMVVEGK). T10 acts as the Acyl-ester intermediate in catalysis.

The protein belongs to the asparaginase 1 family. In terms of assembly, homotetramer.

Its subcellular location is the periplasm. It catalyses the reaction L-glutamine + H2O = L-glutamate + NH4(+). The enzyme catalyses L-asparagine + H2O = L-aspartate + NH4(+). This is Glutaminase-asparaginase (ansB) from Delftia acidovorans (Pseudomonas acidovorans).